The following is a 675-amino-acid chain: INO80 complex subunit D (675 aa).

Disordered stretches follow at residues 1 to 39 (MNNNSNNNNNNNIDQKNETTNEITNNTSNNNNIINNVNQ), 183 to 203 (TGNNNNNTTTTTTTTTTNSTP), 274 to 324 (LKQK…ERQV), 473 to 523 (DSNK…KLNK), and 627 to 675 (VPVT…TMIS). Composition is skewed to low complexity over residues 282 to 318 (QQLQNQKMFEQSQQQDQQQKPVQQPIQQQQQQDQLQI), 482 to 519 (NNDNNINNNNNNNNNNNNNNNNNNNNNNNNNNNNNNNN), and 634 to 648 (NQNNQNNNNNNTNNS). The segment covering 664–675 (EILKDSDNTMIS) has biased composition (basic and acidic residues).

This sequence belongs to the INO80D family. Component of the chromatin-remodeling INO80 complex.

Its subcellular location is the nucleus. Functionally, putative regulatory component of the chromatin remodeling INO80 complex which is involved in transcriptional regulation, DNA replication and probably DNA repair. This Dictyostelium discoideum (Social amoeba) protein is INO80 complex subunit D.